The sequence spans 63 residues: Large ribosomal subunit protein bL28c (63 aa).

Belongs to the bacterial ribosomal protein bL28 family.

Its subcellular location is the plastid. The protein localises to the chloroplast. This Porphyra purpurea (Red seaweed) protein is Large ribosomal subunit protein bL28c (rpl28).